The following is a 260-amino-acid chain: Apolipoprotein A-I (260 aa).

A signal peptide spans 1 to 18 (MKFAALALALLLAVGSHA). The tract at residues 32–63 (ARAVLDVYLTQVKDMSLRAVNQLDDPQYAEFK) is 3 X approximate tandem repeats. 2 consecutive repeat copies span residues 64-85 (TNLA…GSVS) and 87-107 (MTDS…ESLN). Residues 64–260 (TNLAQRIEEM…EIIAASVTKS (197 aa)) form a 10 X approximate tandem repeats region. A 3; half-length repeat occupies 108–118 (VDLEALKSSLA). A run of 5 repeats spans residues 119 to 140 (PQNE…TLLT), 141 to 162 (PIYN…TRLE), 163 to 184 (PVME…AVLM), 185 to 206 (PMVE…EVVQ), and 207 to 225 (PYVQ…QAQT). One copy of the 9; half-length repeat lies at 226–236 (VDTDALRTKIT). Repeat 10 spans residues 237 to 260 (PLVEEIKVKMNAIFEIIAASVTKS).

The protein belongs to the apolipoprotein A1/A4/E family. As to expression, strong expression in liver with lower expression in intestine.

The protein resides in the secreted. Its function is as follows. Participates in the reverse transport of cholesterol from tissues to the liver for excretion by promoting cholesterol efflux from tissues and by acting as a cofactor for the lecithin cholesterol acyltransferase (LCAT). This Sparus aurata (Gilthead sea bream) protein is Apolipoprotein A-I (apoa1).